Here is a 428-residue protein sequence, read N- to C-terminus: Tyrosine--tRNA ligase (428 aa).

Tyr-36 is a binding site for L-tyrosine. The 'HIGH' region motif lies at 41 to 50 (PTAPSLHAGH). Residues Tyr-171 and Gln-175 each contribute to the L-tyrosine site. A 'KMSKS' region motif is present at residues 231–235 (KFGKS). Lys-234 is a binding site for ATP. Residues 359–416 (DSIVDLLVETGLAASKGAARRNVAEGGVYVNNIRIESDEWIPQHSDFLHERWLVLRRG) enclose the S4 RNA-binding domain.

The protein belongs to the class-I aminoacyl-tRNA synthetase family. TyrS type 1 subfamily. As to quaternary structure, homodimer.

The protein resides in the cytoplasm. It catalyses the reaction tRNA(Tyr) + L-tyrosine + ATP = L-tyrosyl-tRNA(Tyr) + AMP + diphosphate + H(+). Catalyzes the attachment of tyrosine to tRNA(Tyr) in a two-step reaction: tyrosine is first activated by ATP to form Tyr-AMP and then transferred to the acceptor end of tRNA(Tyr). The polypeptide is Tyrosine--tRNA ligase (Mycolicibacterium fortuitum (Mycobacterium fortuitum)).